The chain runs to 496 residues: Glycerol kinase 2 (496 aa).

Residue Thr11 participates in ADP binding. Residues Thr11, Thr12, and Ser13 each contribute to the ATP site. Thr11 lines the sn-glycerol 3-phosphate pocket. Position 15 (Arg15) interacts with ADP. Sn-glycerol 3-phosphate contacts are provided by Arg81, Glu82, Tyr133, and Asp242. Glycerol is bound by residues Arg81, Glu82, Tyr133, Asp242, and Gln243. Positions 264 and 307 each coordinate ADP. 4 residues coordinate ATP: Thr264, Gly307, Gln311, and Gly408. The ADP site is built by Gly408 and Asn412.

It belongs to the FGGY kinase family.

The enzyme catalyses glycerol + ATP = sn-glycerol 3-phosphate + ADP + H(+). It functions in the pathway polyol metabolism; glycerol degradation via glycerol kinase pathway; sn-glycerol 3-phosphate from glycerol: step 1/1. With respect to regulation, inhibited by fructose 1,6-bisphosphate (FBP). Its function is as follows. Key enzyme in the regulation of glycerol uptake and metabolism. Catalyzes the phosphorylation of glycerol to yield sn-glycerol 3-phosphate. In Thermotoga maritima (strain ATCC 43589 / DSM 3109 / JCM 10099 / NBRC 100826 / MSB8), this protein is Glycerol kinase 2.